The chain runs to 61 residues: Small ribosomal subunit protein uS14 (61 aa).

Zn(2+) contacts are provided by Cys24, Cys27, Cys40, and Cys43.

This sequence belongs to the universal ribosomal protein uS14 family. Zinc-binding uS14 subfamily. As to quaternary structure, part of the 30S ribosomal subunit. Contacts proteins S3 and S10. It depends on Zn(2+) as a cofactor.

Functionally, binds 16S rRNA, required for the assembly of 30S particles and may also be responsible for determining the conformation of the 16S rRNA at the A site. The chain is Small ribosomal subunit protein uS14 from Geotalea uraniireducens (strain Rf4) (Geobacter uraniireducens).